A 159-amino-acid polypeptide reads, in one-letter code: MFISRELKYILLTSVSALFISAVLGLFCGLSFFTILVRSLLQFVFFFVIGLLIEYIFKKYLSNLFSTELSGNMENKPQDDKKSDKDFKENLDFQNKNSLYENSQNISSSGDFIEEVKKYKFETEDVSRGSDKNKKMSFIEDNDPKVVADAIKTLMSKKE.

Transmembrane regions (helical) follow at residues 17–37 and 40–60; these read ALFISAVLGLFCGLSFFTILV and LLQFVFFFVIGLLIEYIFKKY.

It localises to the cell membrane. This is an uncharacterized protein from Borreliella burgdorferi (strain ATCC 35210 / DSM 4680 / CIP 102532 / B31) (Borrelia burgdorferi).